A 283-amino-acid chain; its full sequence is Flagellar filament 35 kDa core protein (283 aa).

This sequence belongs to the bacterial flagellin family. As to quaternary structure, the flagellum consists of two outer layers around a core that contains several antigenically related polypeptides.

The protein resides in the periplasmic flagellum. The protein localises to the periplasm. Its function is as follows. Component of the core of the flagella. This is Flagellar filament 35 kDa core protein (flaB) from Leptospira interrogans serogroup Icterohaemorrhagiae serovar copenhageni (strain Fiocruz L1-130).